We begin with the raw amino-acid sequence, 480 residues long: Prostacyclin synthase (480 aa).

The helical transmembrane segment at 1–21 (MMWTALLLVGLSILVIVLYGR) threads the bilayer. Residues Arg-104, Leu-110, Asn-277, 338–339 (TR), and Arg-362 contribute to the substrate site. Position 421 (Cys-421) interacts with heme.

Belongs to the cytochrome P450 family. Heme serves as cofactor.

The protein localises to the endoplasmic reticulum membrane. It catalyses the reaction prostaglandin H2 = prostaglandin I2. The enzyme catalyses a hydroperoxyeicosatetraenoate = an oxoeicosatetraenoate + H2O. It carries out the reaction (15S)-hydroperoxy-(5Z,8Z,11Z,13E)-eicosatetraenoate = 15-oxo-(5Z,8Z,11Z,13E)-eicosatetraenoate + H2O. The catalysed reaction is (15S)-hydroperoxy-(5Z,8Z,11Z,13E)-eicosatetraenoate + AH2 = (15S)-hydroxy-(5Z,8Z,11Z,13E)-eicosatetraenoate + A + H2O. Catalyzes the isomerization of prostaglandin H2 to prostacyclin (= prostaglandin I2). Its function is as follows. Catalyzes the biosynthesis and metabolism of eicosanoids. Catalyzes the isomerization of prostaglandin H2 to prostacyclin (= prostaglandin I2), a potent mediator of vasodilation and inhibitor of platelet aggregation. Additionally, displays dehydratase activity, toward hydroperoxyeicosatetraenoates (HPETEs), especially toward (15S)-hydroperoxy-(5Z,8Z,11Z,13E)-eicosatetraenoate (15(S)-HPETE). This is Prostacyclin synthase from Danio rerio (Zebrafish).